Here is a 37-residue protein sequence, read N- to C-terminus: Large ribosomal subunit protein bL36 (37 aa).

This sequence belongs to the bacterial ribosomal protein bL36 family.

This is Large ribosomal subunit protein bL36 from Prochlorococcus marinus (strain MIT 9313).